A 423-amino-acid chain; its full sequence is Histidine--tRNA ligase (423 aa).

This sequence belongs to the class-II aminoacyl-tRNA synthetase family. As to quaternary structure, homodimer.

The protein resides in the cytoplasm. The enzyme catalyses tRNA(His) + L-histidine + ATP = L-histidyl-tRNA(His) + AMP + diphosphate + H(+). In Pasteurella multocida (strain Pm70), this protein is Histidine--tRNA ligase (hisS).